The following is a 138-amino-acid chain: Large-conductance mechanosensitive channel (138 aa).

3 helical membrane-spanning segments follow: residues 15 to 35, 38 to 58, and 80 to 100; these read VDLA…NSIV, IIMP…MFIQ, and GNFI…FLVV.

Belongs to the MscL family. As to quaternary structure, homopentamer.

The protein resides in the cell inner membrane. Channel that opens in response to stretch forces in the membrane lipid bilayer. May participate in the regulation of osmotic pressure changes within the cell. The protein is Large-conductance mechanosensitive channel of Brucella canis (strain ATCC 23365 / NCTC 10854 / RM-666).